Here is a 643-residue protein sequence, read N- to C-terminus: Chromosomal replication initiator protein DnaA (643 aa).

The domain I, interacts with DnaA modulators stretch occupies residues 1-97 (MADVPADLAA…VDDSAGEPPP (97 aa)). The disordered stretch occupies residues 87–303 (TVDDSAGEPP…ASGPGEPTAR (217 aa)). Residues 97–302 (PAAPPAQQTP…PASGPGEPTA (206 aa)) form a domain II region. A compositionally biased stretch (polar residues) spans 195–209 (SPSSQDAYGSPSQDY). The span at 222–269 (QRGDYDTPRAEYEPARPDYDSARPDYESARPEYDQRDPVRRELPEPPA) shows a compositional bias: basic and acidic residues. The segment covering 291–300 (PAPASGPGEP) has biased composition (low complexity). Residues 303–519 (RLNPKYLFDT…GALIRVTAFA (217 aa)) are domain III, AAA+ region. The ATP site is built by glycine 347, glycine 349, lysine 350, and threonine 351. The segment at 520–643 (SLNRQPVDLG…TELTNRIKNG (124 aa)) is domain IV, binds dsDNA.

This sequence belongs to the DnaA family. Oligomerizes as a right-handed, spiral filament on DNA at oriC.

It is found in the cytoplasm. Plays an essential role in the initiation and regulation of chromosomal replication. ATP-DnaA binds to the origin of replication (oriC) to initiate formation of the DNA replication initiation complex once per cell cycle. Binds the DnaA box (a 9 base pair repeat at the origin) and separates the double-stranded (ds)DNA. Forms a right-handed helical filament on oriC DNA; dsDNA binds to the exterior of the filament while single-stranded (ss)DNA is stabiized in the filament's interior. The ATP-DnaA-oriC complex binds and stabilizes one strand of the AT-rich DNA unwinding element (DUE), permitting loading of DNA polymerase. After initiation quickly degrades to an ADP-DnaA complex that is not apt for DNA replication. Binds acidic phospholipids. The sequence is that of Chromosomal replication initiator protein DnaA from Streptomyces reticuli.